We begin with the raw amino-acid sequence, 149 residues long: uncharacterized protein (149 aa).

To Rhizobium NGR234A y4oM.

This is an uncharacterized protein from Sinorhizobium fredii (strain NBRC 101917 / NGR234).